Here is a 305-residue protein sequence, read N- to C-terminus: Ribonuclease BN (305 aa).

Residues His-64, His-66, Asp-68, His-69, His-141, Asp-212, and His-270 each contribute to the Zn(2+) site. Residue Asp-68 is the Proton acceptor of the active site.

It belongs to the RNase Z family. RNase BN subfamily. Homodimer. It depends on Zn(2+) as a cofactor.

Functionally, zinc phosphodiesterase, which has both exoribonuclease and endoribonuclease activities. The chain is Ribonuclease BN from Escherichia coli O81 (strain ED1a).